The primary structure comprises 118 residues: NADH-quinone oxidoreductase subunit A 2 (118 aa).

The next 3 membrane-spanning stretches (helical) occupy residues 5–25, 62–82, and 87–107; these read YLPI…SVIF, LIAM…PWAV, and LGMF…VGYV.

The protein belongs to the complex I subunit 3 family. NDH-1 is composed of 14 different subunits. Subunits NuoA, H, J, K, L, M, N constitute the membrane sector of the complex.

It localises to the cell inner membrane. The catalysed reaction is a quinone + NADH + 5 H(+)(in) = a quinol + NAD(+) + 4 H(+)(out). In terms of biological role, NDH-1 shuttles electrons from NADH, via FMN and iron-sulfur (Fe-S) centers, to quinones in the respiratory chain. The immediate electron acceptor for the enzyme in this species is believed to be ubiquinone. Couples the redox reaction to proton translocation (for every two electrons transferred, four hydrogen ions are translocated across the cytoplasmic membrane), and thus conserves the redox energy in a proton gradient. The protein is NADH-quinone oxidoreductase subunit A 2 of Citrifermentans bemidjiense (strain ATCC BAA-1014 / DSM 16622 / JCM 12645 / Bem) (Geobacter bemidjiensis).